Consider the following 2181-residue polypeptide: Non-reducing polyketide synthase subA (2181 aa).

Residues 74–180 (QWVKGNSTQP…LALCCGAYID (107 aa)) are N-terminal acylcarrier protein transacylase domain (SAT). The Ketosynthase family 3 (KS3) domain maps to 347–779 (QAQLLVLGPV…GTNAAMLVCQ (433 aa)). Residues C525, H661, and H702 each act as for beta-ketoacyl synthase activity in the active site. Positions 891–1193 (VLAGQTGRRV…SFYPAALGEP (303 aa)) are malonyl-CoA:ACP transacylase (MAT) domain. Catalysis depends on S977, which acts as the For acyl/malonyl transferase activity. Residues 1269-1401 (VSLIGKTQNA…GVITLQEVYS (133 aa)) form an N-terminal hotdog fold region. The region spanning 1269–1579 (VSLIGKTQNA…FQKIAISSLK (311 aa)) is the PKS/mFAS DH domain. Residues 1276 to 1573 (QNAGVQTVEY…TILGAKFQKI (298 aa)) form a product template (PT) domain region. The C-terminal hotdog fold stretch occupies residues 1425–1579 (SASVVQGDFI…FQKIAISSLK (155 aa)). The disordered stretch occupies residues 1652-1673 (ISGSSRSTSSSPPSLESRSQAM). The span at 1653-1670 (SGSSRSTSSSPPSLESRS) shows a compositional bias: low complexity. The region spanning 1677–1753 (EITEGAGSAL…TLFHTIFPQQ (77 aa)) is the Carrier domain. Position 1713 is an O-(pantetheine 4'-phosphoryl)serine (S1713). Residues 1982–2164 (EFMNCLFSYN…QSGFGHVDWT (183 aa)) form a methyltransferase (CMeT) domain region.

Its pathway is secondary metabolite biosynthesis; terpenoid biosynthesis. Functionally, non-reducing polyketide synthase; part of the gene cluster that mediates the biosynthesis of the immunosuppressants subglutinols, meroterpenoids consisting of an alpha-pyrone (4-hydroxy-5,6-dimethyl-2-pyrone) moiety attached to a decalin core fused to a five-membered cyclic ether carrying a prenylside chain. The first step of the pathway is the synthesis of the alpha-pyrone moiety by the polyketide synthase subA via condensation of one acetyl-CoA starter unit with 3 malonyl-CoA units and 2 methylations. The alpha-pyrone is then combined with geranylgeranyl pyrophosphate (GGPP) formed by the GGPP synthase subD through the action of the prenyltransferase subC to yield a linear alpha-pyrone diterpenoid. Subsequent steps in the subglutinol biosynthetic pathway involve the decalin core formation, which is thought to be initiated by the epoxidation of the C10-C11 olefin by the FAD-dependent oxidoreductase subE. The following cyclization cascade would be catalyzed by the terpene cyclase subB. Lastly, the FAD-dependent dehydrogenase subF probably catalyzes the five-membered cyclic ether formation to complete the formation of subglutinol A. Subsequent redox reactions appear to give rise to subglutinol C and D, however, it remains unclear which enzymes are responsible for these transformations. SubD may have secondary function in the conversion of the identified subglutinols to subglutinol analog 45, which seems to be the major product of the cluster. In Metarhizium robertsii (strain ARSEF 23 / ATCC MYA-3075) (Metarhizium anisopliae (strain ARSEF 23)), this protein is Non-reducing polyketide synthase subA.